Consider the following 343-residue polypeptide: Glucokinase (343 aa).

Position 18–23 (18–23 (GDIGGT)) interacts with ATP.

This sequence belongs to the bacterial glucokinase family.

The protein resides in the cytoplasm. The enzyme catalyses D-glucose + ATP = D-glucose 6-phosphate + ADP + H(+). This Brucella abortus (strain 2308) protein is Glucokinase.